The primary structure comprises 280 residues: Protein FLOURY 1-like (280 aa).

A helical membrane pass occupies residues 22 to 42 (GFGFGIFVIGCSSQFFNLVFL). Residues 153 to 187 (VALSETELDEKNHHGEEEESEDEEESQSQNDEDQL) form a disordered region. Residues 169-187 (EEESEDEEESQSQNDEDQL) show a composition bias toward acidic residues. In terms of domain architecture, GTD-binding spans 188 to 280 (LDVITLRTMV…LDDDEDKIQM (93 aa)).

It localises to the membrane. The chain is Protein FLOURY 1-like from Arabidopsis thaliana (Mouse-ear cress).